The chain runs to 440 residues: Protein CapE (440 aa).

12 consecutive transmembrane segments (helical) span residues 7–27 (VILI…IGYL), 31–51 (IGFR…VYLL), 60–80 (LVYL…NIFL), 102–122 (FSIA…ISVF), 141–161 (FYYT…FYII), 179–199 (ELPM…FAFS), 204–224 (THIK…LITG), 249–269 (WWMI…IKVF), 324–344 (IFSY…GYGF), 360–380 (YYNG…LLLW), 382–402 (FTNF…SVLI), and 409–429 (FSFV…LLFI).

Its subcellular location is the cell membrane. It participates in capsule biogenesis; capsule polysaccharide biosynthesis. Required for the biosynthesis of type 1 capsular polysaccharide. In Staphylococcus aureus, this protein is Protein CapE (capE).